Reading from the N-terminus, the 216-residue chain is Ribose-5-phosphate isomerase A (216 aa).

Substrate-binding positions include Thr26–Thr29, Asp79–Asp82, and Lys92–Gly95. The active-site Proton acceptor is Glu101. Lys119 is a binding site for substrate.

The protein belongs to the ribose 5-phosphate isomerase family. Homodimer.

It catalyses the reaction aldehydo-D-ribose 5-phosphate = D-ribulose 5-phosphate. Its pathway is carbohydrate degradation; pentose phosphate pathway; D-ribose 5-phosphate from D-ribulose 5-phosphate (non-oxidative stage): step 1/1. Functionally, catalyzes the reversible conversion of ribose-5-phosphate to ribulose 5-phosphate. The polypeptide is Ribose-5-phosphate isomerase A (Legionella pneumophila (strain Paris)).